Reading from the N-terminus, the 235-residue chain is Photosystem I assembly protein Ycf4 (235 aa).

The next 2 helical transmembrane spans lie at 21 to 43 and 63 to 85; these read NLCW…TSSY and GIVM…CTIL.

The protein belongs to the Ycf4 family.

Its subcellular location is the plastid. It localises to the chloroplast thylakoid membrane. Seems to be required for the assembly of the photosystem I complex. This Amborella trichopoda protein is Photosystem I assembly protein Ycf4.